Here is a 356-residue protein sequence, read N- to C-terminus: Glutenin, low molecular weight subunit (356 aa).

Positions 1–19 (MKTFLVFALLALAAASAVA) are cleaved as a signal peptide. The tract at residues 20–179 (QISQQQQAPP…LQQQRPPFSR (160 aa)) is disordered.

The protein belongs to the gliadin/glutenin family. Disulfide-bridge linked aggregates.

Its function is as follows. Glutenins are high-molecular weight seed storage proteins of wheat endosperm. Thought to be responsible for the visco-elastic property of wheat dough. The polypeptide is Glutenin, low molecular weight subunit (Triticum aestivum (Wheat)).